The following is an 862-amino-acid chain: Protein kintoun (862 aa).

Disordered stretches follow at residues 208-229, 564-602, 626-670, and 743-854; these read KLLP…RTTK, TKRE…KKER, GEGA…STMP, and RREV…QFKS. Residues 564–586 are compositionally biased toward basic and acidic residues; sequence TKREEHGEPECDEKDGSEAEKAR. The span at 587–601 shows a compositional bias: basic residues; the sequence is TLQKAKRNSRKKKKE. 2 stretches are compositionally biased toward basic and acidic residues: residues 748–757 and 766–785; these read RRADARRMSE and KDAH…HDEK.

The protein belongs to the PIH1 family. Kintoun subfamily.

It localises to the cytoplasm. In terms of biological role, required for cytoplasmic pre-assembly of axonemal dyneins, thereby playing a central role in motility in cilia and flagella. Involved in pre-assembly of dynein arm complexes in the cytoplasm before intraflagellar transport loads them for the ciliary compartment. The protein is Protein kintoun of Anopheles gambiae (African malaria mosquito).